The chain runs to 386 residues: Trichocyst matrix protein T2-A (386 aa).

Positions methionine 1–alanine 19 are cleaved as a signal peptide. A propeptide spanning residues aspartate 20–glycine 48 is cleaved from the precursor. Positions leucine 51–lysine 154 form a coiled coil. A propeptide spanning residues lysine 184–glutamine 238 is cleaved from the precursor. Positions serine 293–aspartate 332 form a coiled coil.

The protein belongs to the TMP family.

Its subcellular location is the trichocyst. Its function is as follows. Structural protein that crystallize inside the trichocyst matrix. This is Trichocyst matrix protein T2-A (T2A) from Paramecium tetraurelia.